Here is a 502-residue protein sequence, read N- to C-terminus: Bone morphogenetic protein receptor type-1B (502 aa).

An N-terminal signal peptide occupies residues 1–13 (MLLRSAGKLNVGT). Residues 1–25 (MLLRSAGKLNVGTKKEDGESTAPTP) are disordered. Over 14–126 (KKEDGESTAP…DFVDGPIHHR (113 aa)) the chain is Extracellular. Disulfide bonds link Cys-32-Cys-53, Cys-34-Cys-38, Cys-47-Cys-71, Cys-81-Cys-95, and Cys-96-Cys-102. Residues 127–148 (ALLISVTVCSLLLVLIILFCYF) traverse the membrane as a helical segment. The Cytoplasmic portion of the chain corresponds to 149-502 (RYKRQETRPR…KMSESQDIKL (354 aa)). The region spanning 174 to 203 (ESLRDLIEQSQSSGSGSGLPLLVQRTIAKQ) is the GS domain. The Protein kinase domain occupies 204–494 (IQMVKQIGKG…LRVKKTLAKM (291 aa)). ATP is bound by residues 210-218 (IGKGRYGEV) and Lys-231. Asp-332 functions as the Proton acceptor in the catalytic mechanism.

Belongs to the protein kinase superfamily. TKL Ser/Thr protein kinase family. TGFB receptor subfamily. Interacts with high affinity with GDF5; positively regulates chondrocyte differentiation. Interacts with SCUBE3. Interacts with TSC22D1/TSC-22. Interacts with TGFBR3. Mg(2+) is required as a cofactor. The cofactor is Mn(2+). In terms of processing, autophosphorylated.

The protein localises to the cell membrane. The enzyme catalyses L-threonyl-[receptor-protein] + ATP = O-phospho-L-threonyl-[receptor-protein] + ADP + H(+). It catalyses the reaction L-seryl-[receptor-protein] + ATP = O-phospho-L-seryl-[receptor-protein] + ADP + H(+). Functionally, on ligand binding, forms a receptor complex consisting of two type II and two type I transmembrane serine/threonine kinases. Type II receptors phosphorylate and activate type I receptors which autophosphorylate, then bind and activate SMAD transcriptional regulators. Receptor for BMP7/OP-1 and GDF5. Positively regulates chondrocyte differentiation through GDF5 interaction. This chain is Bone morphogenetic protein receptor type-1B (BMPR1B), found in Homo sapiens (Human).